Consider the following 501-residue polypeptide: ADP,ATP carrier protein 3 (501 aa).

A run of 12 helical transmembrane segments spans residues 23-43 (LKLFIPMALMMLCILFNFGAL), 59-79 (IISFLKLWLVLPSCVIFTVLY), 90-110 (YIFYIIVGSFLLFFLLFAYII), 146-166 (YALMYIFAELWSAVVINLMFW), 183-203 (PVLGMVGNIGLIIAGSVLVFF), 227-247 (IMLQPIMSIIVTAGIIAMLLF), 293-313 (IALLIICYGLLINIVEGPWKA), 326-346 (VNFMGRFNIWMGISCVTFMII), 361-381 (LLTPIMLSITGLMFFIFIIFI), 387-407 (CFGDFNLLYAAIIVGAIQNIL), 446-466 (FGKSLGAFIQSLIFIIIPTAT), and 470-490 (IIIYLLITFIVMMSLWIWNVI).

The protein belongs to the ADP/ATP translocase tlc family.

The protein localises to the cell membrane. In terms of biological role, provides the rickettsial cell with host ATP in exchange for rickettsial ADP. This is an obligate exchange system. This energy acquiring activity is an important component of rickettsial parasitism. This is ADP,ATP carrier protein 3 (tlcC) from Rickettsia conorii (strain ATCC VR-613 / Malish 7).